A 478-amino-acid chain; its full sequence is Stromelysin-1 (478 aa).

Positions 1-17 are cleaved as a signal peptide; it reads MQNLPALLLFCGVVCSA. The propeptide at 18-99 is activation peptide; the sequence is YPVDRAAEDE…PRCGVPDVGD (82 aa). The short motif at 90–97 is the Cysteine switch element; sequence PRCGVPDV. Position 92 (Cys-92) interacts with Zn(2+). Asp-124 and Asp-158 together coordinate Ca(2+). His-168 and Asp-170 together coordinate Zn(2+). Ca(2+) is bound by residues Asp-175, Gly-176, Gly-178, and Val-180. His-183 provides a ligand contact to Zn(2+). Gly-190 and Asp-194 together coordinate Ca(2+). Residue His-196 participates in Zn(2+) binding. The Ca(2+) site is built by Asp-198, Asp-199, and Glu-201. Zn(2+) is bound at residue His-218. Residue Glu-219 is part of the active site. Zn(2+) is bound by residues His-222 and His-228. A disordered region spans residues 260–286; it reads QSLYGGPPSDSSNDPVVPTESVPPGPG. The span at 266–277 shows a compositional bias: low complexity; sequence PPSDSSNDPVVP. Hemopexin repeat units lie at residues 288 to 337, 338 to 384, 386 to 434, and 435 to 478; these read PAAC…WPSL, PSGL…GFPP, VKKI…FPGV, and DSKV…WLNC. A disulfide bridge connects residues Cys-291 and Cys-478. Residue Asp-298 participates in Ca(2+) binding. Asp-390 and Asp-439 together coordinate Ca(2+). N-linked (GlcNAc...) asparagine glycosylation occurs at Asn-452.

It belongs to the peptidase M10A family. Ca(2+) serves as cofactor. It depends on Zn(2+) as a cofactor.

Its subcellular location is the secreted. The protein localises to the extracellular space. It localises to the extracellular matrix. It carries out the reaction Preferential cleavage where P1', P2' and P3' are hydrophobic residues.. In terms of biological role, metalloproteinase with a rather broad substrate specificity that can degrade fibronectin, laminin, gelatins of type I, III, IV, and V; collagens III, IV, X, and IX, and cartilage proteoglycans. Activates different molecules including growth factors, plasminogen or other matrix metalloproteinases such as MMP9. Once released into the extracellular matrix (ECM), the inactive pro-enzyme is activated by the plasmin cascade signaling pathway. Also acts intracellularly. For example, in dopaminergic neurons, gets activated by the serine protease HTRA2 upon stress and plays a pivotal role in DA neuronal degeneration by mediating microglial activation and alpha-synuclein/SNCA cleavage. In addition, plays a role in immune response and possesses antiviral activity against various viruses. Mechanistically, translocates from the cytoplasm into the cell nucleus upon virus infection to influence NF-kappa-B activities. This Canis lupus familiaris (Dog) protein is Stromelysin-1 (MMP3).